A 435-amino-acid polypeptide reads, in one-letter code: Monodehydroascorbate reductase 4, cytosolic (435 aa).

Residues 14-17, E41, R48, K53, I96, and 147-148 contribute to the FAD site; these read GGVA and RD. NAD(+)-binding positions include 172-178, E196, R202, and G261; that span reads GGYIGLE. NADP(+) is bound at residue 174 to 178; the sequence is YIGLE. R202 and G261 together coordinate NADP(+). D298 is an FAD binding site. 314 to 315 is a binding site for NAD(+); the sequence is EH. 314–315 lines the NADP(+) pocket; it reads EH. V316 contributes to the FAD binding site. R320 serves as a coordination point for L-ascorbate. Y349 contacts FAD. Y349 serves as a coordination point for NAD(+). Y349 is a binding site for NADP(+). R351 provides a ligand contact to L-ascorbate.

This sequence belongs to the FAD-dependent oxidoreductase family. It depends on FAD as a cofactor. As to expression, expressed in anthers.

It localises to the cytoplasm. The catalysed reaction is 2 monodehydro-L-ascorbate radical + NADH + H(+) = 2 L-ascorbate + NAD(+). Catalyzes the conversion of monodehydroascorbate to ascorbate, oxidizing NADH in the process. Ascorbate is a major antioxidant against reactive oxygen species (ROS) and nitric oxide (NO). The polypeptide is Monodehydroascorbate reductase 4, cytosolic (Oryza sativa subsp. japonica (Rice)).